The chain runs to 730 residues: Zinc finger protein 615 (730 aa).

Residues 7–78 (LTLEDVAVDF…EDEIYSRICF (72 aa)) form the KRAB domain. 19 C2H2-type zinc fingers span residues 203-225 (HVCSECGKAFLKLSQFIDHQRVH), 231-253 (HVCSMCGKAFSRKSRLMDHQRTH), 259-281 (YECTECDKTFLKKSQLNIHQKTH), 287-309 (YTCSECGKAFIKKCRLIYHQRTH), 315-337 (HGCSVCGKAFSTKFSLTTHQKTH), 343-365 (YICSECGKGFIEKRRLIAHHRTH), 371-393 (FICNKCGKGFTLKNSLITHQQTH), 399-421 (YTCSECGKGFSMKHCLMVHQRTH), 427-449 (YKCNECGKGFALKSPLIRHQRTH), 455-477 (YVCTECRKGFTMKSDLIVHQRTH), 483-505 (YICNDCGKGFTVKSRLIVHQRTH), 511-533 (YVCGECGKGFPAKIRLMGHQRTH), 539-561 (YICDECGKGFTEKSHLNVHRRTH), 567-589 (YVCSECGKGLTGKSMLIAHQRTH), 595-617 (YICNECGKGFTMKSTLSIHQQTH), 623-645 (YKCNECDKSFRKKTCLIQHQRFH), 651-673 (FACTECGKFSLRKNDLITHQRIH), 679-701 (YKCSDCGKAFTTKSGLNVHQRKH), and 707-729 (YGCSDCGKAFAHLSILVKHKRIH).

The protein belongs to the krueppel C2H2-type zinc-finger protein family.

It localises to the nucleus. May be involved in transcriptional regulation. The polypeptide is Zinc finger protein 615 (ZNF615) (Pongo abelii (Sumatran orangutan)).